Reading from the N-terminus, the 895-residue chain is MTIYLCIAFNMVNTYIDYLRLRKYWKILNQIKKHREEIKQLTNNCLKIKTTEFKKRIKSGISLDQILPETFAVASEAAERVLGLNPYDVQMIGGIVLHEGKIAEMKTGEGKSLAASFPAYLNALTEKGVHIITVNDYLARRDYESIGKIFEFLGMKVGLINQYTPISKRKNNYLADITYVTNSEIGFDYLRDNMATQIKELTQRPFHFCIIDEVDSILIDESRTPLIISGRTKTRKDKYELAHRLANFLKKSIHYKIDEKNRTIILSDLGVITCEKILKIKSIYSAQNTWAHFIYNALKAKELYLKNVHYIVRDQQAIIVDEFTGRIMPERRWADGLHQSIEAKENLQIKEETKTLASITYQNLFLLYLKISGMTGTAKTEENELISIYSLPVICIPTYKSMIRKDLPDLIFQTEIEKLKAVTEECVKMHLLGRPILVGTTNIQKSEILSQLLNQYQIRHNLLNAKPQNVKRESEIIAQAGRKYAVTISTNMAGRGTDIILGGNLEYIIKNKITSLFKPIILTGNTQYIIIDKSLKSSGNEIRDINSNILKIINLHRQNPKLTIAEFGNSLNIASKKIKSNNEYILNLRSIYIIFENIYKKYFDIESKEVKNIGGLCVIGTERHESRRIDNQLRGRSGRQGDVGSSIFFISLEDNLLRIFGGERISKMMHTFMPSVNEPIQSPLLSRSLDSAQKKVESLHYNFRKQLFQYDQILNSQRKAIYLERRLILESNEIVAWTMAYMELTIIDILNDQYLYSHRKPRDKVLKNINKIYDLLASPISLIKIEKYTFNKKTILKQLKISYDLKKAQIDKTSCGLMKSLERSLILEQIDTNWSEHIQQMSFLKEFIGWRGYAQKDPLIEYKNESYILFIKMIRTIRQNILYLLFRAEPTLDFS.

ATP is bound by residues Q90, 108-112 (GEGKS), and D498.

The protein belongs to the SecA family.

Its subcellular location is the plastid. It is found in the chloroplast stroma. The protein resides in the chloroplast thylakoid membrane. The enzyme catalyses ATP + H2O + cellular proteinSide 1 = ADP + phosphate + cellular proteinSide 2.. Its function is as follows. Has a central role in coupling the hydrolysis of ATP to the transfer of proteins across the thylakoid membrane. The chain is Protein translocase subunit SecA from Cyanidium caldarium (Red alga).